We begin with the raw amino-acid sequence, 131 residues long: Peptide methionine sulfoxide reductase MsrB (131 aa).

The 123-residue stretch at 8–130 (LDTWREELTD…NSLSLKLVPR (123 aa)) folds into the MsrB domain. Zn(2+) contacts are provided by C47, C50, C96, and C99. C119 serves as the catalytic Nucleophile.

The protein belongs to the MsrB Met sulfoxide reductase family. It depends on Zn(2+) as a cofactor.

The enzyme catalyses L-methionyl-[protein] + [thioredoxin]-disulfide + H2O = L-methionyl-(R)-S-oxide-[protein] + [thioredoxin]-dithiol. The polypeptide is Peptide methionine sulfoxide reductase MsrB (Ectopseudomonas mendocina (strain ymp) (Pseudomonas mendocina)).